A 910-amino-acid chain; its full sequence is Seizure 6-like protein 2 (910 aa).

The first 27 residues, 1 to 27 (MGTPRAQHPPPPQLLFLILLSCPWIQG), serve as a signal peptide directing secretion. At 28 to 844 (LPLKEEEILP…DPSRQLEGGN (817 aa)) the chain is on the extracellular side. The interval 41-48 (SETPTVAS) is O-glycosylated at one site. The segment at 65–152 (EMGYLPGSDR…PLGPEGGEEE (88 aa)) is disordered. The span at 123–145 (LTPPPGTTAPPPPSPASPGPPLG) shows a compositional bias: pro residues. Cys-173 and Cys-202 are oxidised to a cystine. Positions 173–286 (CNNNISEGEG…GGFRIHYQAY (114 aa)) constitute a CUB 1 domain. N-linked (GlcNAc...) asparagine glycans are attached at residues Asn-176, Asn-222, and Asn-247. Residues 288 to 347 (LSCGFPPRPAHGDVSVTDLHPGGTATFHCDSGYQLQGEETLICLNGTRPSWNGETPSCMA) form the Sushi 1 domain. Disulfide bonds link Cys-290–Cys-330, Cys-316–Cys-345, Cys-349–Cys-376, Cys-464–Cys-508, Cys-491–Cys-523, and Cys-527–Cys-553. 5 N-linked (GlcNAc...) asparagine glycosylation sites follow: Asn-332, Asn-355, Asn-373, Asn-473, and Asn-517. In terms of domain architecture, CUB 2 spans 349-459 (CGGTIHNATL…LLLSLRFEAF (111 aa)). The region spanning 462–525 (DRCFAPFLAH…WNDTEPACKA (64 aa)) is the Sushi 2 domain. Positions 527 to 638 (CGGELSEPAG…QGFVLHFKEV (112 aa)) constitute a CUB 3 domain. N-linked (GlcNAc...) asparagine glycosylation is present at Asn-641. 3 Sushi domains span residues 642–701 (DTCP…ACQK), 703–766 (MTCA…KCAL), and 769–830 (EPCL…LCKV). 6 cysteine pairs are disulfide-bonded: Cys-644–Cys-686, Cys-672–Cys-699, Cys-705–Cys-747, Cys-733–Cys-764, Cys-771–Cys-813, and Cys-799–Cys-828. Residues 845 to 865 (LALAILLPLGLVIVLGSGVYI) form a helical membrane-spanning segment. At 866–910 (YYTKLQGKSLFGFSGSHSYSPITVESDFSNPLYEAGDTREYEVSI) the chain is on the cytoplasmic side.

It belongs to the SEZ6 family. In terms of processing, O-glycosylated with core 1 or possibly core 8 glycans.

It is found in the cell membrane. It localises to the endoplasmic reticulum membrane. Functionally, may contribute to specialized endoplasmic reticulum functions in neurons. In Homo sapiens (Human), this protein is Seizure 6-like protein 2 (SEZ6L2).